A 215-amino-acid polypeptide reads, in one-letter code: MNIILMGLPGAGKGTQASEIVKKFPIPHISTGDMFRKAIKDETDLGKEAKSYMDRGELVPDEVTVGIVKERISEDDAKKGFLLDGFPRTIDQAESLSQIMSELDREIDAVINIEVPEEELMNRLTGRRICEKCGTTYHLVFNPPKVDGICDIDGGKLYQREDDNPETVSNRLSVNVKQSKPILEYYNNKGVLKNIDGSKDIDEVTNDVIDILDHL.

Residue 10–15 coordinates ATP; it reads GAGKGT. The tract at residues 30–59 is NMP; it reads STGDMFRKAIKDETDLGKEAKSYMDRGELV. AMP is bound by residues Thr31, Arg36, 57-59, 85-88, and Gln92; these read ELV and GFPR. The segment at 126 to 163 is LID; that stretch reads GRRICEKCGTTYHLVFNPPKVDGICDIDGGKLYQREDD. Arg127 is an ATP binding site. The Zn(2+) site is built by Cys130 and Cys133. 136–137 serves as a coordination point for ATP; the sequence is TY. Zn(2+)-binding residues include Cys150 and Asp153. Residues Arg160 and Arg171 each coordinate AMP. Position 199 (Lys199) interacts with ATP.

Belongs to the adenylate kinase family. Monomer.

Its subcellular location is the cytoplasm. The enzyme catalyses AMP + ATP = 2 ADP. The protein operates within purine metabolism; AMP biosynthesis via salvage pathway; AMP from ADP: step 1/1. Functionally, catalyzes the reversible transfer of the terminal phosphate group between ATP and AMP. Plays an important role in cellular energy homeostasis and in adenine nucleotide metabolism. This Staphylococcus epidermidis (strain ATCC 35984 / DSM 28319 / BCRC 17069 / CCUG 31568 / BM 3577 / RP62A) protein is Adenylate kinase.